A 138-amino-acid chain; its full sequence is Small ribosomal subunit protein uS11c (138 aa).

This sequence belongs to the universal ribosomal protein uS11 family. In terms of assembly, part of the 30S ribosomal subunit.

It is found in the plastid. Its subcellular location is the chloroplast. The chain is Small ribosomal subunit protein uS11c from Acorus calamus (Sweet flag).